We begin with the raw amino-acid sequence, 141 residues long: Putative pre-16S rRNA nuclease (141 aa).

This sequence belongs to the YqgF nuclease family.

It is found in the cytoplasm. Could be a nuclease involved in processing of the 5'-end of pre-16S rRNA. In Cupriavidus taiwanensis (strain DSM 17343 / BCRC 17206 / CCUG 44338 / CIP 107171 / LMG 19424 / R1) (Ralstonia taiwanensis (strain LMG 19424)), this protein is Putative pre-16S rRNA nuclease.